The chain runs to 584 residues: Myo-inositol transporter 1 (584 aa).

At 1–81 (MGIHIPYLTS…TSVMITFNQS (81 aa)) the chain is on the cytoplasmic side. T12 carries the phosphothreonine modification. The segment at 13–42 (SQSNVGDAVGNADSVEFNSEHDSPSKRGKI) is disordered. Residues S26, S31, S35, S37, and S46 each carry the phosphoserine modification. Residues 30–42 (NSEHDSPSKRGKI) are compositionally biased toward basic and acidic residues. The helical transmembrane segment at 82–102 (LSPFIITLTFVASISGFMFGY) threads the bilayer. The Extracellular segment spans residues 103–129 (DTGYISSALISIGTDLDHKVLTYGEKE). The helical transmembrane segment at 130 to 150 (IVTAATSLGALITSIFAGTAA) threads the bilayer. At 151 to 163 (DIFGRKRCLMGSN) the chain is on the cytoplasmic side. The helical transmembrane segment at 164–184 (LMFVIGAILQVSAHTFWQMAV) threads the bilayer. Topologically, residues 185–186 (GR) are extracellular. The helical transmembrane segment at 187–207 (LIMGFGVGIGSLIAPLFISEI) threads the bilayer. Over 208 to 215 (APKMIRGR) the chain is Cytoplasmic. A helical transmembrane segment spans residues 216–236 (LTVINSLWLTGGQLVAYGCGA). The Extracellular segment spans residues 237–246 (GLNYVNNGWR). The helical transmembrane segment at 247–267 (ILVGLSLIPTAVQFTCLCFLP) threads the bilayer. Residues 268 to 349 (DTPRYYVMKG…IGCGLQAIQQ (82 aa)) lie on the Cytoplasmic side of the membrane. The chain crosses the membrane as a helical span at residues 350–370 (FTGWNSLMYFSGTIFETVGFK). N371 carries N-linked (GlcNAc...) asparagine glycosylation. Residues 371–376 (NSSAVS) are Extracellular-facing. Residues 377-397 (IIVSGTNFIFTLVAFFSIDKI) form a helical membrane-spanning segment. Topologically, residues 398-400 (GRR) are cytoplasmic. A helical membrane pass occupies residues 401 to 421 (TILLIGLPGMTMALVVCSIAF). Residues 422-441 (HFLGIKFDGAVAVVVSSGFS) lie on the Extracellular side of the membrane. A helical membrane pass occupies residues 442 to 462 (SWGIVIIVFIIVFAAFYALGI). The Cytoplasmic segment spans residues 463–486 (GTVPWQQSELFPQNVRGIGTSYAT). Residues 487–507 (ATNWAGSLVIASTFLTMLQNI) traverse the membrane as a helical segment. The Extracellular portion of the chain corresponds to 508-510 (TPA). The chain crosses the membrane as a helical span at residues 511–531 (GTFAFFAGLSCLSTIFCYFCY). Residues 532 to 584 (PELSGLELEEVQTILKDGFNIKASKALAKKRKQQVARVHELKYEPTQEIIEDI) lie on the Cytoplasmic side of the membrane. Residue K573 forms a Glycyl lysine isopeptide (Lys-Gly) (interchain with G-Cter in ubiquitin) linkage.

The protein belongs to the major facilitator superfamily. Sugar transporter (TC 2.A.1.1) family.

The protein resides in the cell membrane. It carries out the reaction myo-inositol(out) + H(+)(out) = myo-inositol(in) + H(+)(in). Functionally, major transporter for myo-inositol. This Saccharomyces cerevisiae (strain ATCC 204508 / S288c) (Baker's yeast) protein is Myo-inositol transporter 1 (ITR1).